The chain runs to 279 residues: Oxygen-dependent coproporphyrinogen-III oxidase (279 aa).

Serine 102 is a binding site for substrate. Residues histidine 106 and histidine 116 each contribute to the a divalent metal cation site. Histidine 116 acts as the Proton donor in catalysis. 118–120 (NTR) contributes to the substrate binding site. Histidine 149 and histidine 179 together coordinate a divalent metal cation. An important for dimerization region spans residues 244 to 279 (YVEFNLLYDRGTKFGLMTDGNVEAILMSLPPEVKFN).

It belongs to the aerobic coproporphyrinogen-III oxidase family. In terms of assembly, homodimer. The cofactor is a divalent metal cation.

It is found in the cytoplasm. It catalyses the reaction coproporphyrinogen III + O2 + 2 H(+) = protoporphyrinogen IX + 2 CO2 + 2 H2O. Its pathway is porphyrin-containing compound metabolism; protoporphyrin-IX biosynthesis; protoporphyrinogen-IX from coproporphyrinogen-III (O2 route): step 1/1. Involved in the heme biosynthesis. Catalyzes the aerobic oxidative decarboxylation of propionate groups of rings A and B of coproporphyrinogen-III to yield the vinyl groups in protoporphyrinogen-IX. This is Oxygen-dependent coproporphyrinogen-III oxidase from Rickettsia peacockii (strain Rustic).